Reading from the N-terminus, the 559-residue chain is Potassium-transporting ATPase potassium-binding subunit (559 aa).

A run of 13 helical transmembrane segments spans residues 5–25 (GFLL…PLGS), 27–47 (LARL…RILW), 63–83 (LLAL…LLFW), 132–152 (GLTV…FALI), 170–190 (LVRI…LFFI), 253–273 (LAQM…FGEA), 283–303 (LLWA…WAEV), 327–347 (FGVL…CGAV), 356–376 (ALGG…FGGV), 379–399 (GLYG…LMIG), 416–436 (MTAL…ALAM), 484–504 (LLAF…MAIA), and 524–544 (GALF…LTFI).

The protein belongs to the KdpA family. As to quaternary structure, the system is composed of three essential subunits: KdpA, KdpB and KdpC.

The protein resides in the cell inner membrane. Its function is as follows. Part of the high-affinity ATP-driven potassium transport (or Kdp) system, which catalyzes the hydrolysis of ATP coupled with the electrogenic transport of potassium into the cytoplasm. This subunit binds the periplasmic potassium ions and delivers the ions to the membrane domain of KdpB through an intramembrane tunnel. The protein is Potassium-transporting ATPase potassium-binding subunit of Salmonella enteritidis PT4 (strain P125109).